Consider the following 248-residue polypeptide: Uridylate kinase (248 aa).

15–18 (KLSG) is an ATP binding site. An involved in allosteric activation by GTP region spans residues 23–28 (GAEGFG). UMP is bound at residue glycine 57. Residues glycine 58 and arginine 62 each coordinate ATP. UMP is bound by residues aspartate 77 and 138–145 (TGNPFFTT). ATP-binding residues include threonine 165, tyrosine 171, and aspartate 174.

It belongs to the UMP kinase family. Homohexamer.

It localises to the cytoplasm. The catalysed reaction is UMP + ATP = UDP + ADP. Its pathway is pyrimidine metabolism; CTP biosynthesis via de novo pathway; UDP from UMP (UMPK route): step 1/1. Its activity is regulated as follows. Allosterically activated by GTP. Inhibited by UTP. Catalyzes the reversible phosphorylation of UMP to UDP. The sequence is that of Uridylate kinase from Yersinia enterocolitica serotype O:8 / biotype 1B (strain NCTC 13174 / 8081).